The chain runs to 247 residues: Submandibular gland secretory Glx-rich protein CB (247 aa).

An N-terminal signal peptide occupies residues 1-18 (MLVVLLTAALLALSSAQG). The segment at 14–219 (SSAQGTDEEV…PQHYRGRPPK (206 aa)) is disordered. Low complexity-rich tracts occupy residues 39 to 50 (PVDSGSDPPSAD), 58 to 71 (EGES…EPPA), 81 to 93 (QQEP…QEPP), 104 to 116 (QQEP…QEPP), 126 to 139 (QQQQ…QEPP), 150 to 159 (QQESTQAENQ), and 178 to 196 (VESP…QQTN). 5 repeat units span residues 67–89 (EEPP…QAEN), 90–112 (QEPP…QAEN), 113–135 (QEPP…QAEN), 136–158 (QEPP…QAEN), and 159–181 (QEPS…VESP). Residues 67 to 181 (EEPPATSGSE…QPEEGNVESP (115 aa)) are 5 X 23 AA tandem repeats. Over residues 197 to 212 (PEEKPPAPKTQEEPQH) the composition is skewed to basic and acidic residues.

Submandibular gland acinar cells.

The protein resides in the secreted. Its function is as follows. GRP proteins have a marked affinity for hydroxyapatite. They may play a role in the formation of the protective acquired pellicle at the saliva-tooth interface. This chain is Submandibular gland secretory Glx-rich protein CB (Grpcb), found in Rattus norvegicus (Rat).